The sequence spans 327 residues: Phenylalanine--tRNA ligase alpha subunit (327 aa).

Glu252 contacts Mg(2+).

The protein belongs to the class-II aminoacyl-tRNA synthetase family. Phe-tRNA synthetase alpha subunit type 1 subfamily. In terms of assembly, tetramer of two alpha and two beta subunits. It depends on Mg(2+) as a cofactor.

The protein localises to the cytoplasm. The enzyme catalyses tRNA(Phe) + L-phenylalanine + ATP = L-phenylalanyl-tRNA(Phe) + AMP + diphosphate + H(+). The chain is Phenylalanine--tRNA ligase alpha subunit from Yersinia pseudotuberculosis serotype O:1b (strain IP 31758).